Consider the following 734-residue polypeptide: Sulfate transporter (734 aa).

Residues 1–18 (MSLKNEDQNDLSPKDSVK) are compositionally biased toward basic and acidic residues. The tract at residues 1–38 (MSLKNEDQNDLSPKDSVKGNDQYRAPSGIHLEPEEESR) is disordered. Phosphoserine is present on residues serine 12 and serine 16. The next 2 helical transmembrane spans lie at 113-133 (VMSG…YSLL) and 138-158 (PIYG…LGTS). A glycan (N-linked (GlcNAc...) asparagine) is linked at asparagine 194. Transmembrane regions (helical) follow at residues 214 to 234 (IIVG…MGFF), 237 to 257 (GFVS…GASF), 379 to 399 (VDAI…SEMF), 415 to 435 (AIGF…SAAL), 453 to 473 (VMTA…FFSL), and 519 to 539 (LIST…CVIL). The STAS domain occupies 563–714 (AYKNLQAKSG…YSIYEAMTFA (152 aa)).

Belongs to the SLC26A/SulP transporter (TC 2.A.53) family. In terms of processing, N-glycosylated.

The protein localises to the cell membrane. The protein resides in the apical cell membrane. The catalysed reaction is oxalate(in) + sulfate(out) = oxalate(out) + sulfate(in). It catalyses the reaction sulfate(out) + 2 chloride(in) = sulfate(in) + 2 chloride(out). It carries out the reaction oxalate(out) + 2 chloride(in) = oxalate(in) + 2 chloride(out). The enzyme catalyses bromide(in) + chloride(out) = bromide(out) + chloride(in). The catalysed reaction is nitrate(in) + chloride(out) = nitrate(out) + chloride(in). It catalyses the reaction iodide(in) + chloride(out) = iodide(out) + chloride(in). In terms of biological role, sulfate transporter which mediates sulfate uptake into chondrocytes in order to maintain adequate sulfation of proteoglycans which is needed for cartilage development. Mediates electroneutral anion exchange of sulfate ions for oxalate ions, sulfate and oxalate ions for chloride and/or hydroxyl ions and chloride ions for bromide, iodide and nitrate ions. The coupling of sulfate transport to both hydroxyl and chloride ions likely serves to ensure transport at both acidic pH when most sulfate uptake is mediated by sulfate-hydroxide exchange and alkaline pH when most sulfate uptake is mediated by sulfate-chloride exchange. Essential for chondrocyte proliferation, differentiation and cell size expansion. This is Sulfate transporter (SLC26A2) from Bos taurus (Bovine).